The sequence spans 292 residues: ATP synthase gamma chain (292 aa).

It belongs to the ATPase gamma chain family. In terms of assembly, F-type ATPases have 2 components, CF(1) - the catalytic core - and CF(0) - the membrane proton channel. CF(1) has five subunits: alpha(3), beta(3), gamma(1), delta(1), epsilon(1). CF(0) has three main subunits: a, b and c.

It is found in the cell membrane. Its function is as follows. Produces ATP from ADP in the presence of a proton gradient across the membrane. The gamma chain is believed to be important in regulating ATPase activity and the flow of protons through the CF(0) complex. The sequence is that of ATP synthase gamma chain from Streptococcus thermophilus (strain CNRZ 1066).